A 138-amino-acid polypeptide reads, in one-letter code: MGARRLGRELALQMLYSRDYAAGEAAPLLELVLDESEPGAAAGRSFADDLVRGVLEHRQEIDTAITGASKNWSIGRMARVDLSILRMAMYELLFRSDIPKNVTINEAIEVAKKFGTEDSPAFINGILDEIASTLPDKG.

It belongs to the NusB family.

Involved in transcription antitermination. Required for transcription of ribosomal RNA (rRNA) genes. Binds specifically to the boxA antiterminator sequence of the ribosomal RNA (rrn) operons. This is Transcription antitermination protein NusB from Geobacter sulfurreducens (strain ATCC 51573 / DSM 12127 / PCA).